A 75-amino-acid polypeptide reads, in one-letter code: ATP synthase subunit 9, mitochondrial (75 aa).

2 helical membrane passes run 10–30 and 55–75; these read LVLG…GILF and FALV…VYFI.

It belongs to the ATPase C chain family. As to quaternary structure, F-type ATPases have 2 components, CF(1) - the catalytic core - and CF(0) - the membrane proton channel. CF(1) has five subunits: alpha(3), beta(3), gamma(1), delta(1), epsilon(1). CF(0) has three main subunits: a, b and c.

The protein resides in the mitochondrion membrane. In terms of biological role, mitochondrial membrane ATP synthase (F(1)F(0) ATP synthase or Complex V) produces ATP from ADP in the presence of a proton gradient across the membrane which is generated by electron transport complexes of the respiratory chain. F-type ATPases consist of two structural domains, F(1) - containing the extramembraneous catalytic core and F(0) - containing the membrane proton channel, linked together by a central stalk and a peripheral stalk. During catalysis, ATP synthesis in the catalytic domain of F(1) is coupled via a rotary mechanism of the central stalk subunits to proton translocation. Part of the complex F(0) domain. A homomeric c-ring of probably 10 subunits is part of the complex rotary element. The polypeptide is ATP synthase subunit 9, mitochondrial (ATP9) (Paramecium tetraurelia).